Here is a 182-residue protein sequence, read N- to C-terminus: Protein Syd (182 aa).

The protein belongs to the Syd family.

The protein resides in the cell inner membrane. In terms of biological role, interacts with the SecY protein in vivo. May bind preferentially to an uncomplexed state of SecY, thus functioning either as a chelating agent for excess SecY in the cell or as a regulatory factor that negatively controls the translocase function. In Pectobacterium atrosepticum (strain SCRI 1043 / ATCC BAA-672) (Erwinia carotovora subsp. atroseptica), this protein is Protein Syd.